The chain runs to 319 residues: Acetyl esterase (319 aa).

The short motif at 91–93 (HGG) is the Involved in the stabilization of the negatively charged intermediate by the formation of the oxyanion hole element. Catalysis depends on residues S165, D262, and H292.

It belongs to the 'GDXG' lipolytic enzyme family. As to quaternary structure, homodimer. Interacts with MalT and MelA.

Its subcellular location is the cytoplasm. In terms of biological role, displays esterase activity towards short chain fatty esters (acyl chain length of up to 8 carbons). Able to hydrolyze triacetylglycerol (triacetin) and tributyrylglycerol (tributyrin), but not trioleylglycerol (triolein) or cholesterol oleate. Negatively regulates MalT activity by antagonizing maltotriose binding. Inhibits MelA galactosidase activity. This is Acetyl esterase from Escherichia coli O9:H4 (strain HS).